Here is a 444-residue protein sequence, read N- to C-terminus: Ribitol-5-phosphate xylosyltransferase 1 (444 aa).

At methionine 1–cysteine 9 the chain is on the cytoplasmic side. A helical; Signal-anchor for type II membrane protein membrane pass occupies residues serine 10 to glycine 30. The Extracellular segment spans residues arginine 31–valine 444. The tract at residues threonine 38–arginine 79 is disordered. The segment covering alanine 51–serine 60 has biased composition (basic and acidic residues).

Belongs to the RXYLT1 family. As to quaternary structure, forms a complex composed of FKTN/fukutin, FKRP and RXYLT1/TMEM5.

It is found in the golgi apparatus membrane. The enzyme catalyses 3-O-[Rib-ol-P-Rib-ol-P-3-beta-D-GalNAc-(1-&gt;3)-beta-D-GlcNAc-(1-&gt;4)-(O-6-P-alpha-D-Man)]-Thr-[protein] + UDP-alpha-D-xylose = 3-O-[beta-D-Xyl-(1-&gt;4)-Rib-ol-P-Rib-ol-P-3-beta-D-GalNAc-(1-&gt;3)-beta-D-GlcNAc-(1-&gt;4)-(O-6-P-alpha-D-Man)]-Thr-[protein] + UDP + H(+). It functions in the pathway protein modification; protein glycosylation. Functionally, acts as a UDP-D-xylose:ribitol-5-phosphate beta1,4-xylosyltransferase, which catalyzes the transfer of UDP-D-xylose to ribitol 5-phosphate (Rbo5P) to form the Xylbeta1-4Rbo5P linkage on O-mannosyl glycan. Participates in the biosynthesis of the phosphorylated O-mannosyl trisaccharide (N-acetylgalactosamine-beta-3-N-acetylglucosamine-beta-4-(phosphate-6-)mannose), a carbohydrate structure present in alpha-dystroglycan (DAG1), which is required for binding laminin G-like domain-containing extracellular proteins with high affinity. This chain is Ribitol-5-phosphate xylosyltransferase 1, found in Mus musculus (Mouse).